An 879-amino-acid chain; its full sequence is Phosphoenolpyruvate carboxylase (879 aa).

Active-site residues include His137 and Lys545.

Belongs to the PEPCase type 1 family. Mg(2+) serves as cofactor.

It carries out the reaction oxaloacetate + phosphate = phosphoenolpyruvate + hydrogencarbonate. Its function is as follows. Forms oxaloacetate, a four-carbon dicarboxylic acid source for the tricarboxylic acid cycle. The polypeptide is Phosphoenolpyruvate carboxylase (Yersinia enterocolitica serotype O:8 / biotype 1B (strain NCTC 13174 / 8081)).